The chain runs to 430 residues: GTPase Obg (430 aa).

Residues 1–158 (MFVDQVKISL…LDVSLELKLL (158 aa)) form the Obg domain. The tract at residues 118–145 (KGGRGGRGNSRFATPRNPAPDFSEKGEP) is disordered. The OBG-type G domain maps to 159–329 (ADVGLVGFPS…LLYAIADKLE (171 aa)). Residues 165-172 (GFPSVGKS), 190-194 (FTTIK), 212-215 (DLPG), 282-285 (NKMD), and 310-312 (STI) each bind GTP. Mg(2+)-binding residues include Ser172 and Thr192. The OCT domain maps to 352–430 (KHTPSQDKFT…ILGGEFEFVE (79 aa)).

This sequence belongs to the TRAFAC class OBG-HflX-like GTPase superfamily. OBG GTPase family. In terms of assembly, monomer. The cofactor is Mg(2+).

The protein resides in the cytoplasm. Its function is as follows. An essential GTPase which binds GTP, GDP and possibly (p)ppGpp with moderate affinity, with high nucleotide exchange rates and a fairly low GTP hydrolysis rate. Plays a role in control of the cell cycle, stress response, ribosome biogenesis and in those bacteria that undergo differentiation, in morphogenesis control. The sequence is that of GTPase Obg from Staphylococcus aureus (strain bovine RF122 / ET3-1).